A 127-amino-acid polypeptide reads, in one-letter code: Large ribosomal subunit protein eL24 (127 aa).

The disordered stretch occupies residues 93–127 (KRAQKPEVKQAAAEQAKREIKEKKKAAAKKAAPKK). Positions 115–127 (KKKAAAKKAAPKK) are enriched in basic residues.

Belongs to the eukaryotic ribosomal protein eL24 family.

This chain is Large ribosomal subunit protein eL24 (rpl24), found in Dictyostelium discoideum (Social amoeba).